A 168-amino-acid chain; its full sequence is Phosphopantetheine adenylyltransferase (168 aa).

S8 is a substrate binding site. ATP contacts are provided by residues S8–F9 and H16. K40, T72, and R86 together coordinate substrate. ATP contacts are provided by residues G87 to R89, E97, and Y122 to S128.

The protein belongs to the bacterial CoaD family. Homohexamer. It depends on Mg(2+) as a cofactor.

The protein localises to the cytoplasm. The enzyme catalyses (R)-4'-phosphopantetheine + ATP + H(+) = 3'-dephospho-CoA + diphosphate. It participates in cofactor biosynthesis; coenzyme A biosynthesis; CoA from (R)-pantothenate: step 4/5. In terms of biological role, reversibly transfers an adenylyl group from ATP to 4'-phosphopantetheine, yielding dephospho-CoA (dPCoA) and pyrophosphate. The sequence is that of Phosphopantetheine adenylyltransferase from Thermosynechococcus vestitus (strain NIES-2133 / IAM M-273 / BP-1).